The primary structure comprises 907 residues: Alanine--tRNA ligase (907 aa).

Zn(2+) contacts are provided by His602, His606, Cys706, and His710.

The protein belongs to the class-II aminoacyl-tRNA synthetase family. The cofactor is Zn(2+).

It localises to the cytoplasm. The enzyme catalyses tRNA(Ala) + L-alanine + ATP = L-alanyl-tRNA(Ala) + AMP + diphosphate. Its function is as follows. Catalyzes the attachment of alanine to tRNA(Ala) in a two-step reaction: alanine is first activated by ATP to form Ala-AMP and then transferred to the acceptor end of tRNA(Ala). Also edits incorrectly charged Ser-tRNA(Ala) and Gly-tRNA(Ala) via its editing domain. This is Alanine--tRNA ligase from Thermofilum pendens (strain DSM 2475 / Hrk 5).